The primary structure comprises 225 residues: Cytidylate kinase (225 aa).

Residue 10–18 (GPASSGKST) participates in ATP binding.

It belongs to the cytidylate kinase family. Type 1 subfamily.

The protein localises to the cytoplasm. It carries out the reaction CMP + ATP = CDP + ADP. The enzyme catalyses dCMP + ATP = dCDP + ADP. The polypeptide is Cytidylate kinase (Streptococcus suis (strain 98HAH33)).